The primary structure comprises 240 residues: DUP240 protein DFP1 (240 aa).

The segment at 1–29 (MQPYLKKNTHATDDPKASPLKEGSPDNPE) is disordered. Transmembrane regions (helical) follow at residues 61–81 (IMIN…DIWF) and 84–104 (VLSP…VLQI).

Belongs to the DUP/COS family.

It localises to the membrane. The chain is DUP240 protein DFP1 from Saccharomyces cerevisiae (Baker's yeast).